The chain runs to 435 residues: Serine carboxypeptidase-like 12 (435 aa).

The first 21 residues, 1 to 21 (MKSTPKLLLLLLFIINHHVDS), serve as a signal peptide directing secretion. 3 disulfides stabilise this stretch: Cys-80/Cys-323, Cys-244/Cys-258, and Cys-282/Cys-289. Asn-101 carries an N-linked (GlcNAc...) asparagine glycan. Residue Ser-176 is part of the active site. Residues Asn-313, Asn-336, and Asn-344 are each glycosylated (N-linked (GlcNAc...) asparagine). Residue Asp-360 is part of the active site. Asn-376 carries N-linked (GlcNAc...) asparagine glycosylation. His-413 is a catalytic residue. Asn-420 carries N-linked (GlcNAc...) asparagine glycosylation.

Belongs to the peptidase S10 family. In terms of tissue distribution, expressed in roots.

It localises to the secreted. In terms of biological role, probable carboxypeptidase. This chain is Serine carboxypeptidase-like 12 (SCPL12), found in Arabidopsis thaliana (Mouse-ear cress).